The following is a 149-amino-acid chain: 3-hydroxyacyl-[acyl-carrier-protein] dehydratase FabZ (149 aa).

Histidine 50 is a catalytic residue.

It belongs to the thioester dehydratase family. FabZ subfamily.

The protein resides in the cytoplasm. It catalyses the reaction a (3R)-hydroxyacyl-[ACP] = a (2E)-enoyl-[ACP] + H2O. In terms of biological role, involved in unsaturated fatty acids biosynthesis. Catalyzes the dehydration of short chain beta-hydroxyacyl-ACPs and long chain saturated and unsaturated beta-hydroxyacyl-ACPs. This Pediococcus pentosaceus (strain ATCC 25745 / CCUG 21536 / LMG 10740 / 183-1w) protein is 3-hydroxyacyl-[acyl-carrier-protein] dehydratase FabZ.